The primary structure comprises 892 residues: Isoleucine--tRNA ligase (892 aa).

Residues 60-70 (PYANGSIHIGH) carry the 'HIGH' region motif. Glu-552 is an L-isoleucyl-5'-AMP binding site. The short motif at 593–597 (KMSKS) is the 'KMSKS' region element. An ATP-binding site is contributed by Lys-596. 4 residues coordinate Zn(2+): Cys-862, Cys-865, Cys-879, and Cys-882.

The protein belongs to the class-I aminoacyl-tRNA synthetase family. IleS type 1 subfamily. As to quaternary structure, monomer. The cofactor is Zn(2+).

Its subcellular location is the cytoplasm. The catalysed reaction is tRNA(Ile) + L-isoleucine + ATP = L-isoleucyl-tRNA(Ile) + AMP + diphosphate. Functionally, catalyzes the attachment of isoleucine to tRNA(Ile). As IleRS can inadvertently accommodate and process structurally similar amino acids such as valine, to avoid such errors it has two additional distinct tRNA(Ile)-dependent editing activities. One activity is designated as 'pretransfer' editing and involves the hydrolysis of activated Val-AMP. The other activity is designated 'posttransfer' editing and involves deacylation of mischarged Val-tRNA(Ile). This Mycoplasmopsis agalactiae (strain NCTC 10123 / CIP 59.7 / PG2) (Mycoplasma agalactiae) protein is Isoleucine--tRNA ligase.